We begin with the raw amino-acid sequence, 362 residues long: 3-dehydroquinate synthase (362 aa).

NAD(+) is bound by residues 71-76, 105-109, 129-130, Lys-142, Lys-151, and 169-172; these read DGEQYK, GVIGD, TT, and CLKT. Residues Glu-184, His-247, and His-264 each contribute to the Zn(2+) site.

This sequence belongs to the sugar phosphate cyclases superfamily. Dehydroquinate synthase family. It depends on Co(2+) as a cofactor. Requires Zn(2+) as cofactor. The cofactor is NAD(+).

The protein resides in the cytoplasm. The enzyme catalyses 7-phospho-2-dehydro-3-deoxy-D-arabino-heptonate = 3-dehydroquinate + phosphate. It functions in the pathway metabolic intermediate biosynthesis; chorismate biosynthesis; chorismate from D-erythrose 4-phosphate and phosphoenolpyruvate: step 2/7. Its function is as follows. Catalyzes the conversion of 3-deoxy-D-arabino-heptulosonate 7-phosphate (DAHP) to dehydroquinate (DHQ). In Salmonella schwarzengrund (strain CVM19633), this protein is 3-dehydroquinate synthase.